The primary structure comprises 349 residues: Terpene cyclase rstn5 (349 aa).

The next 5 helical transmembrane spans lie at 4-24 (LTPL…WGVF), 81-101 (FMVQ…TEGA), 116-136 (GLFS…FWFV), 158-178 (VVPS…FDPF), and 181-201 (GLDL…CISL). Residue Asn-222 is glycosylated (N-linked (GlcNAc...) asparagine). Transmembrane regions (helical) follow at residues 228-248 (VAVG…GLTG), 271-291 (LVLL…LLLA), and 309-329 (TLAV…AWAL).

The protein belongs to the membrane-bound ascI terpene cyclase family.

Its subcellular location is the membrane. It functions in the pathway antifungal biosynthesis. Functionally, cyclase; part of the gene cluster that mediates the biosynthesis of the tetrahydropyranyl antifungal agent restricticin that acts as an inhibitor of CYP51 and blocks the ergosterol biosynthesis. The highly reducing polyketide synthase rstn3, the short chain dehydrogenase rstn4, the cyclase rstn5, the FAD-dependent monooxygenase rstn6 and the enoylreductase rstn7 are required to generate the first stable intermediate desmethylrestrictinol. Rstn3 with rstn7 biosynthesize the first polyketide chain intermediate that is reduced by rstn4, followed by epoxidation by rstn6 before 6-endo cyclization via epoxide opening by rstn5 leads to desmethylrestrictinol. The methyltransferase rstn1 then catalyzes the C4 O-methylation of desmethylrestrictinol to produce restrictinol, and the nonribosomal peptide synthetase rstn8 catalyzes the C3 esterification of restrictinol with glycine that leads to restricticin. This Aspergillus nomiae NRRL (strain ATCC 15546 / NRRL 13137 / CBS 260.88 / M93) protein is Terpene cyclase rstn5.